The sequence spans 64 residues: Large ribosomal subunit protein bL35 (64 aa).

The segment at 19 to 41 is disordered; the sequence is SGKVKRERMNGSHNLEHKNRKRT. A compositionally biased stretch (basic and acidic residues) spans 25–35; sequence ERMNGSHNLEH.

The protein belongs to the bacterial ribosomal protein bL35 family.

In Chlorobaculum tepidum (strain ATCC 49652 / DSM 12025 / NBRC 103806 / TLS) (Chlorobium tepidum), this protein is Large ribosomal subunit protein bL35.